The primary structure comprises 421 residues: Testin (421 aa).

Residues 92-199 (MILTNPVAAK…GDVKLPCEMD (108 aa)) enclose the PET domain. Positions 133-164 (EKQPVAGSEGAQYRKKQLAKQLPAHDQDPSKC) are disordered. Residues 155–164 (PAHDQDPSKC) are compositionally biased toward basic and acidic residues. LIM zinc-binding domains lie at 234–297 (YSCY…CDSE), 299–359 (PRCA…NHAV), and 362–421 (QGCH…KMMS).

Belongs to the prickle / espinas / testin family. As to quaternary structure, interacts via LIM domain 1 with ZYX. Interacts (via LIM domain 3) with ENAH and VASP. Interacts with ALKBH4, talin, actin, alpha-actinin, GRIP1 and PXN. Interacts (via LIM domain 2) with ACTL7A (via N-terminus). Heterodimer with ACTL7A; the heterodimer interacts with ENAH to form a heterotrimer.

It localises to the cytoplasm. The protein resides in the cell junction. It is found in the focal adhesion. Scaffold protein that may play a role in cell adhesion, cell spreading and in the reorganization of the actin cytoskeleton. Plays a role in the regulation of cell proliferation. May act as a tumor suppressor. The polypeptide is Testin (TES) (Colobus guereza (Mantled guereza)).